Here is a 346-residue protein sequence, read N- to C-terminus: Anthranilate phosphoribosyltransferase (346 aa).

5-phospho-alpha-D-ribose 1-diphosphate is bound by residues G80, 83-84 (GD), T88, 90-93 (NIST), 108-116 (KHGNTAVSS), and S120. Position 80 (G80) interacts with anthranilate. S92 serves as a coordination point for Mg(2+). N111 is an anthranilate binding site. R166 contributes to the anthranilate binding site. 2 residues coordinate Mg(2+): D225 and E226.

The protein belongs to the anthranilate phosphoribosyltransferase family. As to quaternary structure, homodimer. Mg(2+) serves as cofactor.

It catalyses the reaction N-(5-phospho-beta-D-ribosyl)anthranilate + diphosphate = 5-phospho-alpha-D-ribose 1-diphosphate + anthranilate. Its pathway is amino-acid biosynthesis; L-tryptophan biosynthesis; L-tryptophan from chorismate: step 2/5. In terms of biological role, catalyzes the transfer of the phosphoribosyl group of 5-phosphorylribose-1-pyrophosphate (PRPP) to anthranilate to yield N-(5'-phosphoribosyl)-anthranilate (PRA). This Desulforudis audaxviator (strain MP104C) protein is Anthranilate phosphoribosyltransferase.